The sequence spans 556 residues: MLNLCHALRGVRQFSCSVIVKVKCASCSIKLQDQDPSKPGYYTKPKSLPDSKLNPDLQDLKYLLFSQDIQLSKQAIQNDPDLKTKRDLLLRVICKRCSNALHHNNYNPEEFPESTLNDILNYVPRGSNVMHIVPFVEFPLHLDPNVLKRNDLETTLVLTKSDQVFKDKNAVSKKVPIFMKQFLKNTLRIDSNKTFAISALKNWNISMFYNYFKNYTYLLGNPNVGKSTLINTLLQKYLGYKVKIDSTGKINSPSEEVMQEAFTNPKNFFKIQAAGVSHIPNLTRSVQAYQVGGKILFDLPGYSTSTSRLRLEELIDERWLQRLRKTDLFNRKHIKQKTYESMKGTSQGGCYTVGGIFYLVPPKGSINQIVKYIPGPSKTFKNIEKGIDVFNSCNSSSGTHPLSRYCGIKSVICEKSQYKRYAIPPFIGSIEIVLKDIGYILLRTTGRYEFKGLHEIWIPRGIQVGIREPLENLIESGYQRYIETNGKESSCPRDRPIISSLYEMAPDEADTLNAVKKSYLEKTEKDLSARRFVDDDPYDLVQHLEKKKNPYWYYQW.

Residues 1–21 (MLNLCHALRGVRQFSCSVIVK) constitute a mitochondrion transit peptide. A CP-type G domain is found at 113 to 305 (ESTLNDILNY…LFDLPGYSTS (193 aa)).

It belongs to the TRAFAC class YlqF/YawG GTPase family. GEP3 subfamily.

The protein resides in the mitochondrion. Interacts genetically with prohibitins and thus may be involved in the mitochondrial lipid metabolism. This chain is Genetic interactor of prohibitins 3, mitochondrial (GEP3), found in Saccharomyces cerevisiae (strain Lalvin EC1118 / Prise de mousse) (Baker's yeast).